Here is a 660-residue protein sequence, read N- to C-terminus: DNA ligase (660 aa).

NAD(+) contacts are provided by residues 32–36, 81–82, and E112; these read DEVYD and SM. K114 serves as the catalytic N6-AMP-lysine intermediate. NAD(+)-binding residues include R135, E169, K284, and K308. 4 residues coordinate Zn(2+): C402, C405, C418, and C423. In terms of domain architecture, BRCT spans 578 to 660; it reads VENSPLAHKT…ELLKEAGIEA (83 aa).

It belongs to the NAD-dependent DNA ligase family. LigA subfamily. The cofactor is Mg(2+). Requires Mn(2+) as cofactor.

The enzyme catalyses NAD(+) + (deoxyribonucleotide)n-3'-hydroxyl + 5'-phospho-(deoxyribonucleotide)m = (deoxyribonucleotide)n+m + AMP + beta-nicotinamide D-nucleotide.. In terms of biological role, DNA ligase that catalyzes the formation of phosphodiester linkages between 5'-phosphoryl and 3'-hydroxyl groups in double-stranded DNA using NAD as a coenzyme and as the energy source for the reaction. It is essential for DNA replication and repair of damaged DNA. The chain is DNA ligase from Nitratiruptor sp. (strain SB155-2).